A 305-amino-acid polypeptide reads, in one-letter code: UDP-3-O-acyl-N-acetylglucosamine deacetylase (305 aa).

Zn(2+) contacts are provided by H78, H237, and D241. H264 (proton donor) is an active-site residue.

This sequence belongs to the LpxC family. Zn(2+) serves as cofactor.

It carries out the reaction a UDP-3-O-[(3R)-3-hydroxyacyl]-N-acetyl-alpha-D-glucosamine + H2O = a UDP-3-O-[(3R)-3-hydroxyacyl]-alpha-D-glucosamine + acetate. It functions in the pathway glycolipid biosynthesis; lipid IV(A) biosynthesis; lipid IV(A) from (3R)-3-hydroxytetradecanoyl-[acyl-carrier-protein] and UDP-N-acetyl-alpha-D-glucosamine: step 2/6. Catalyzes the hydrolysis of UDP-3-O-myristoyl-N-acetylglucosamine to form UDP-3-O-myristoylglucosamine and acetate, the committed step in lipid A biosynthesis. This is UDP-3-O-acyl-N-acetylglucosamine deacetylase from Burkholderia lata (strain ATCC 17760 / DSM 23089 / LMG 22485 / NCIMB 9086 / R18194 / 383).